The following is a 442-amino-acid chain: Trigger factor (442 aa).

The region spanning 163–248 (GDQVVIDFLG…IKEVKAPKAA (86 aa)) is the PPIase FKBP-type domain.

It belongs to the FKBP-type PPIase family. Tig subfamily.

The protein localises to the cytoplasm. It carries out the reaction [protein]-peptidylproline (omega=180) = [protein]-peptidylproline (omega=0). Involved in protein export. Acts as a chaperone by maintaining the newly synthesized protein in an open conformation. Functions as a peptidyl-prolyl cis-trans isomerase. The protein is Trigger factor of Dinoroseobacter shibae (strain DSM 16493 / NCIMB 14021 / DFL 12).